The following is a 128-amino-acid chain: Claw keratin (128 aa).

2 tandem repeats follow at residues 83–91 and 92–100. A 3 X 9 AA tandem repeats, Gly-rich region spans residues 83-104; it reads GGYGGLGGYGGYGGLGGYGGYG. A 3; approximate repeat occupies 101-109; sequence GGYGGFGSC.

Belongs to the avian keratin family. Abundantly expressed in the claw and at a low level in feather tissue.

The polypeptide is Claw keratin (CKER1) (Gallus gallus (Chicken)).